The primary structure comprises 102 residues: 10 kDa heat shock protein, mitochondrial (102 aa).

A2 carries the N-acetylalanine modification. K8 is modified (N6-acetyllysine). Residue K28 is modified to N6-succinyllysine. K40 is modified (N6-acetyllysine; alternate). 3 positions are modified to N6-malonyllysine; alternate: K40, K54, and K56. 5 positions are modified to N6-succinyllysine; alternate: K40, K54, K56, K66, and K70. An N6-acetyllysine; alternate mark is found at K56, K66, and K70. Residue T79 is modified to Phosphothreonine. An N6-acetyllysine; alternate mark is found at K80 and K86. Residues K80 and K86 each carry the N6-succinyllysine; alternate modification. K99 carries the N6-acetyllysine modification.

This sequence belongs to the GroES chaperonin family. In terms of assembly, homoheptamer arranged in a ring structure. 2 heptameric Hsp10 rings interact with a Hsp60 tetradecamer in the structure of a back-to-back double heptameric ring to form the symmetrical football complex.

It is found in the mitochondrion matrix. Co-chaperonin implicated in mitochondrial protein import and macromolecular assembly. Together with Hsp60, facilitates the correct folding of imported proteins. May also prevent misfolding and promote the refolding and proper assembly of unfolded polypeptides generated under stress conditions in the mitochondrial matrix. The functional units of these chaperonins consist of heptameric rings of the large subunit Hsp60, which function as a back-to-back double ring. In a cyclic reaction, Hsp60 ring complexes bind one unfolded substrate protein per ring, followed by the binding of ATP and association with 2 heptameric rings of the co-chaperonin Hsp10. This leads to sequestration of the substrate protein in the inner cavity of Hsp60 where, for a certain period of time, it can fold undisturbed by other cell components. Synchronous hydrolysis of ATP in all Hsp60 subunits results in the dissociation of the chaperonin rings and the release of ADP and the folded substrate protein. This Rattus norvegicus (Rat) protein is 10 kDa heat shock protein, mitochondrial (Hspe1).